The chain runs to 155 residues: UPF0178 protein Amet_2995 (155 aa).

This sequence belongs to the UPF0178 family.

In Alkaliphilus metalliredigens (strain QYMF), this protein is UPF0178 protein Amet_2995.